We begin with the raw amino-acid sequence, 241 residues long: MATVSMRDMLKAGVHFGHQTRYWNPKMKPFIFGARNKVHIINLEKTVPMFNEALAELNKISARKGKILFVGTKRAASEAVKEAANSCDQFFVNHRWLGGMLTNWKTVRQSIKRLKDLETQSQDGTFEKLTKKEALMRTRELEKLENSLGGIKDMGGLPDALFVIDADHEHIAIKEANNLGIPVFAIVDTNSDPDGVDFVIPGNDDAIRAVSLYLGAVAATVREGRSQDLASQAEESFVEAE.

This sequence belongs to the universal ribosomal protein uS2 family.

The sequence is that of Small ribosomal subunit protein uS2 from Salmonella agona (strain SL483).